The chain runs to 1885 residues: Fatty acid synthase subunit alpha (1885 aa).

Over residues 92-107 (PDPADLAPKETPKQEE) the composition is skewed to basic and acidic residues. Positions 92–140 (PDPADLAPKETPKQEESTPSAPAAATPTPAAAAAPTPAPAPASAGPVES) are disordered. The span at 108–126 (STPSAPAAATPTPAAAAAP) shows a compositional bias: low complexity. The 76-residue stretch at 146–221 (VKANLLIHVL…EQFQDSFSGQ (76 aa)) folds into the Carrier domain. O-(pantetheine 4'-phosphoryl)serine is present on Ser-181. The 541-residue stretch at 1121–1661 (IQEIVVQHDL…QKGAQAVVVH (541 aa)) folds into the Ketosynthase family 3 (KS3) domain. Catalysis depends on for beta-ketoacyl synthase activity residues Cys-1304, His-1546, and His-1587. Residues Asp-1771, Val-1772, and Glu-1773 each contribute to the Mg(2+) site. Residues 1771–1773 (DVE), Tyr-1797, Ser-1807, 1816–1826 (EAVFKALGVES), 1840–1843 (RDVN), and 1870–1872 (ISH) each bind acetyl-CoA. Residues Ser-1871 and His-1872 each coordinate Mg(2+).

This sequence belongs to the thiolase-like superfamily. Fungal fatty acid synthetase subunit alpha family. [Alpha(6)beta(6)] hexamers of two multifunctional subunits (alpha and beta).

The enzyme catalyses acetyl-CoA + n malonyl-CoA + 2n NADPH + 4n H(+) = a long-chain-acyl-CoA + n CoA + n CO2 + 2n NADP(+).. It catalyses the reaction a fatty acyl-[ACP] + malonyl-[ACP] + H(+) = a 3-oxoacyl-[ACP] + holo-[ACP] + CO2. It carries out the reaction a (3R)-hydroxyacyl-[ACP] + NADP(+) = a 3-oxoacyl-[ACP] + NADPH + H(+). In terms of biological role, fatty acid synthetase catalyzes the formation of long-chain fatty acids from acetyl-CoA, malonyl-CoA and NADPH. The alpha subunit contains domains for: acyl carrier protein, 3-oxoacyl-[acyl-carrier-protein] reductase, and 3-oxoacyl-[acyl-carrier-protein] synthase. This chain is Fatty acid synthase subunit alpha (FAS2), found in Candida albicans (Yeast).